The sequence spans 254 residues: tRNA (guanine-N(1)-)-methyltransferase (254 aa).

S-adenosyl-L-methionine-binding positions include Gly-114 and 134 to 139 (IGDYVL).

Belongs to the RNA methyltransferase TrmD family. As to quaternary structure, homodimer.

It is found in the cytoplasm. The catalysed reaction is guanosine(37) in tRNA + S-adenosyl-L-methionine = N(1)-methylguanosine(37) in tRNA + S-adenosyl-L-homocysteine + H(+). Its function is as follows. Specifically methylates guanosine-37 in various tRNAs. This is tRNA (guanine-N(1)-)-methyltransferase from Desulforamulus reducens (strain ATCC BAA-1160 / DSM 100696 / MI-1) (Desulfotomaculum reducens).